We begin with the raw amino-acid sequence, 863 residues long: Leucine--tRNA ligase (863 aa).

Residues 40-51 carry the 'HIGH' region motif; that stretch reads PYPSGAGLHVGH. A 'KMSKS' region motif is present at residues 635–639; that stretch reads KMSKS. K638 serves as a coordination point for ATP.

Belongs to the class-I aminoacyl-tRNA synthetase family.

It localises to the cytoplasm. The catalysed reaction is tRNA(Leu) + L-leucine + ATP = L-leucyl-tRNA(Leu) + AMP + diphosphate. The chain is Leucine--tRNA ligase from Leptospira interrogans serogroup Icterohaemorrhagiae serovar copenhageni (strain Fiocruz L1-130).